A 484-amino-acid polypeptide reads, in one-letter code: Acetyl-coenzyme A carboxylase carboxyl transferase subunit beta, chloroplastic (484 aa).

In terms of domain architecture, CoA carboxyltransferase N-terminal spans 223-484; that stretch reads LWIQCDNCYG…LHAFFPLNKN (262 aa). Residues Cys-227, Cys-230, Cys-243, and Cys-246 each contribute to the Zn(2+) site. Residues 227 to 246 form a C4-type zinc finger; that stretch reads CDNCYGLMYKKVKMNVCEQC.

This sequence belongs to the AccD/PCCB family. In terms of assembly, acetyl-CoA carboxylase is a heterohexamer composed of biotin carboxyl carrier protein, biotin carboxylase and 2 subunits each of ACCase subunit alpha and ACCase plastid-coded subunit beta (accD). It depends on Zn(2+) as a cofactor.

The protein localises to the plastid. Its subcellular location is the chloroplast stroma. The enzyme catalyses N(6)-carboxybiotinyl-L-lysyl-[protein] + acetyl-CoA = N(6)-biotinyl-L-lysyl-[protein] + malonyl-CoA. Its pathway is lipid metabolism; malonyl-CoA biosynthesis; malonyl-CoA from acetyl-CoA: step 1/1. Functionally, component of the acetyl coenzyme A carboxylase (ACC) complex. Biotin carboxylase (BC) catalyzes the carboxylation of biotin on its carrier protein (BCCP) and then the CO(2) group is transferred by the transcarboxylase to acetyl-CoA to form malonyl-CoA. The protein is Acetyl-coenzyme A carboxylase carboxyl transferase subunit beta, chloroplastic of Crucihimalaya wallichii (Rock-cress).